Consider the following 302-residue polypeptide: tRNA pseudouridine synthase B (302 aa).

The active-site Nucleophile is the Asp-47.

The protein belongs to the pseudouridine synthase TruB family. Type 1 subfamily.

It carries out the reaction uridine(55) in tRNA = pseudouridine(55) in tRNA. Functionally, responsible for synthesis of pseudouridine from uracil-55 in the psi GC loop of transfer RNAs. In Methylobacillus flagellatus (strain ATCC 51484 / DSM 6875 / VKM B-1610 / KT), this protein is tRNA pseudouridine synthase B.